A 186-amino-acid polypeptide reads, in one-letter code: Transcription factor FapR (186 aa).

The MaoC-like domain occupies 98–168 (FTKTQIARGH…YVIEVNSYVR (71 aa)).

This sequence belongs to the FapR family.

In terms of biological role, transcriptional factor involved in regulation of membrane lipid biosynthesis by repressing genes involved in fatty acid and phospholipid metabolism. The sequence is that of Transcription factor FapR from Staphylococcus haemolyticus (strain JCSC1435).